The sequence spans 2690 residues: Probable polyketide synthase 28 (2690 aa).

Positions Tyr15 to Glu443 constitute a Ketosynthase family 3 (KS3) domain. Active-site for beta-ketoacyl synthase activity residues include Cys187, His326, and His366. Residues Gly651–Tyr684 form an acyl/malonyl transferases region. The active-site For acyl/malonyl transferase activity is the Ser661. A coiled-coil region spans residues Asn906–Asn934. The disordered stretch occupies residues Asn916 to Asn946. An N-terminal hotdog fold region spans residues His973–Ser1102. Positions His973–Ser1285 constitute a PKS/mFAS DH domain. His1014 (proton acceptor; for dehydratase activity) is an active-site residue. Residues Asn1119 to Ser1285 form a C-terminal hotdog fold region. Asp1188 functions as the Proton donor; for dehydratase activity in the catalytic mechanism. Residues Leu1401–Glu1429 are disordered. Low complexity predominate over residues Lys1412 to Glu1429. The Carrier domain occupies Ser2594–Tyr2671. Ser2631 is modified (O-(pantetheine 4'-phosphoryl)serine).

The cofactor is pantetheine 4'-phosphate.

Its function is as follows. Probable polyketide synthase. The sequence is that of Probable polyketide synthase 28 (pks28) from Dictyostelium discoideum (Social amoeba).